The sequence spans 170 residues: Vimentin A1 (170 aa).

Residues 1–10 show a composition bias toward polar residues; the sequence is DLTEAANKSN. Residues 1–20 form a disordered region; the sequence is DLTEAANKSNEALRLAKQES. Residues 1-111 form a coil 2 region; that stretch reads DLTEAANKSN…ATYRKLLEGE (111 aa). The region spanning 1–115 is the IF rod domain; sequence DLTEAANKSN…KLLEGEESRI (115 aa). Residues 112 to 170 are tail; that stretch reads ESRISTPLPNFSSFNLRETMLELKPNIESTFTKKVLIKTIETRDGQVLNESTQNHDDLE.

It belongs to the intermediate filament family. Homomer. One of the most prominent phosphoproteins in various cells of mesenchymal origin. Phosphorylation is enhanced during cell division, at which time vimentin filaments are significantly reorganized. In terms of tissue distribution, expressed in low amounts in retina, optic nerve, and brain and in higher amounts in spinal cord.

Vimentins are class-III intermediate filaments found in various non-epithelial cells, especially mesenchymal cells. Vimentin is attached to the nucleus, endoplasmic reticulum, and mitochondria, either laterally or terminally. This Carassius auratus (Goldfish) protein is Vimentin A1.